We begin with the raw amino-acid sequence, 226 residues long: Urease accessory protein UreF (226 aa).

Belongs to the UreF family. UreD, UreF and UreG form a complex that acts as a GTP-hydrolysis-dependent molecular chaperone, activating the urease apoprotein by helping to assemble the nickel containing metallocenter of UreC. The UreE protein probably delivers the nickel.

It localises to the cytoplasm. Functionally, required for maturation of urease via the functional incorporation of the urease nickel metallocenter. This chain is Urease accessory protein UreF, found in Burkholderia mallei (strain NCTC 10247).